The chain runs to 123 residues: Small ribosomal subunit protein uS12 (123 aa).

The residue at position 89 (aspartate 89) is a 3-methylthioaspartic acid.

Belongs to the universal ribosomal protein uS12 family. In terms of assembly, part of the 30S ribosomal subunit. Contacts proteins S8 and S17. May interact with IF1 in the 30S initiation complex.

Functionally, with S4 and S5 plays an important role in translational accuracy. In terms of biological role, interacts with and stabilizes bases of the 16S rRNA that are involved in tRNA selection in the A site and with the mRNA backbone. Located at the interface of the 30S and 50S subunits, it traverses the body of the 30S subunit contacting proteins on the other side and probably holding the rRNA structure together. The combined cluster of proteins S8, S12 and S17 appears to hold together the shoulder and platform of the 30S subunit. In Gluconobacter oxydans (strain 621H) (Gluconobacter suboxydans), this protein is Small ribosomal subunit protein uS12.